A 387-amino-acid chain; its full sequence is Succinate--CoA ligase [ADP-forming] subunit beta (387 aa).

The ATP-grasp domain occupies 9 to 236 (KELFAKHNVP…RDATDPLELK (228 aa)). Residues K45, 52–54 (GRG), S94, and E99 each bind ATP. The Mg(2+) site is built by N191 and D205. Substrate contacts are provided by residues N256 and 318–320 (GIT).

This sequence belongs to the succinate/malate CoA ligase beta subunit family. In terms of assembly, heterotetramer of two alpha and two beta subunits. It depends on Mg(2+) as a cofactor.

The enzyme catalyses succinate + ATP + CoA = succinyl-CoA + ADP + phosphate. It carries out the reaction GTP + succinate + CoA = succinyl-CoA + GDP + phosphate. Its pathway is carbohydrate metabolism; tricarboxylic acid cycle; succinate from succinyl-CoA (ligase route): step 1/1. Succinyl-CoA synthetase functions in the citric acid cycle (TCA), coupling the hydrolysis of succinyl-CoA to the synthesis of either ATP or GTP and thus represents the only step of substrate-level phosphorylation in the TCA. The beta subunit provides nucleotide specificity of the enzyme and binds the substrate succinate, while the binding sites for coenzyme A and phosphate are found in the alpha subunit. This chain is Succinate--CoA ligase [ADP-forming] subunit beta, found in Mycolicibacterium smegmatis (strain ATCC 700084 / mc(2)155) (Mycobacterium smegmatis).